A 146-amino-acid chain; its full sequence is Leptin (146 aa).

The cysteines at positions 96 and 146 are disulfide-linked.

This sequence belongs to the leptin family.

It is found in the secreted. Functionally, key player in the regulation of energy balance and body weight control. Once released into the circulation, has central and peripheral effects by binding LEPR, found in many tissues, which results in the activation of several major signaling pathways. In the hypothalamus, acts as an appetite-regulating factor that induces a decrease in food intake and an increase in energy consumption by inducing anorexinogenic factors and suppressing orexigenic neuropeptides, also regulates bone mass and secretion of hypothalamo-pituitary-adrenal hormones. In the periphery, increases basal metabolism, influences reproductive function, regulates pancreatic beta-cell function and insulin secretion, is pro-angiogenic for endothelial cell and affects innate and adaptive immunity. In the arcuate nucleus of the hypothalamus, activates by depolarization POMC neurons inducing FOS and SOCS3 expression to release anorexigenic peptides and inhibits by hyperpolarization NPY neurons inducing SOCS3 with a consequent reduction on release of orexigenic peptides. In addition to its known satiety inducing effect, has a modulatory role in nutrient absorption. In the intestine, reduces glucose absorption by enterocytes by activating PKC and leading to a sequential activation of p38, PI3K and ERK signaling pathways which exerts an inhibitory effect on glucose absorption. Acts as a growth factor on certain tissues, through the activation of different signaling pathways increases expression of genes involved in cell cycle regulation such as CCND1, via JAK2-STAT3 pathway, or VEGFA, via MAPK1/3 and PI3K-AKT1 pathways. May also play an apoptotic role via JAK2-STAT3 pathway and up-regulation of BIRC5 expression. Pro-angiogenic, has mitogenic activity on vascular endothelial cells and plays a role in matrix remodeling by regulating the expression of matrix metalloproteinases (MMPs) and tissue inhibitors of metalloproteinases (TIMPs). In innate immunity, modulates the activity and function of neutrophils by increasing chemotaxis and the secretion of oxygen radicals. Increases phagocytosis by macrophages and enhances secretion of pro-inflammatory mediators. Increases cytotoxic ability of NK cells. Plays a pro-inflammatory role, in synergy with IL1B, by inducing NOS2 which promotes the production of IL6, IL8 and Prostaglandin E2, through a signaling pathway that involves JAK2, PI3K, MAP2K1/MEK1 and MAPK14/p38. In adaptive immunity, promotes the switch of memory T-cells towards T helper-1 cell immune responses. Increases CD4(+)CD25(-) T-cell proliferation and reduces autophagy during TCR (T-cell receptor) stimulation, through MTOR signaling pathway activation and BCL2 up-regulation. The protein is Leptin (LEP) of Ovis aries (Sheep).